The sequence spans 400 residues: Imidazolonepropionase (400 aa).

Fe(3+) contacts are provided by His70 and His72. The Zn(2+) site is built by His70 and His72. 4-imidazolone-5-propanoate-binding residues include Arg79, Tyr142, and His175. Tyr142 is a binding site for N-formimidoyl-L-glutamate. His239 lines the Fe(3+) pocket. Position 239 (His239) interacts with Zn(2+). Gln242 is a 4-imidazolone-5-propanoate binding site. Residue Asp314 coordinates Fe(3+). Asp314 lines the Zn(2+) pocket. Residues Asn316 and Gly318 each contribute to the N-formimidoyl-L-glutamate site. Thr319 contacts 4-imidazolone-5-propanoate.

This sequence belongs to the metallo-dependent hydrolases superfamily. HutI family. Zn(2+) is required as a cofactor. Requires Fe(3+) as cofactor.

The protein resides in the cytoplasm. The catalysed reaction is 4-imidazolone-5-propanoate + H2O = N-formimidoyl-L-glutamate. The protein operates within amino-acid degradation; L-histidine degradation into L-glutamate; N-formimidoyl-L-glutamate from L-histidine: step 3/3. Functionally, catalyzes the hydrolytic cleavage of the carbon-nitrogen bond in imidazolone-5-propanoate to yield N-formimidoyl-L-glutamate. It is the third step in the universal histidine degradation pathway. The sequence is that of Imidazolonepropionase from Methylobacterium nodulans (strain LMG 21967 / CNCM I-2342 / ORS 2060).